The sequence spans 470 residues: Light-independent protochlorophyllide reductase subunit N (470 aa).

[4Fe-4S] cluster-binding residues include cysteine 24, cysteine 49, and cysteine 109.

It belongs to the BchN/ChlN family. As to quaternary structure, protochlorophyllide reductase is composed of three subunits; ChlL, ChlN and ChlB. Forms a heterotetramer of two ChlB and two ChlN subunits. The cofactor is [4Fe-4S] cluster.

The enzyme catalyses chlorophyllide a + oxidized 2[4Fe-4S]-[ferredoxin] + 2 ADP + 2 phosphate = protochlorophyllide a + reduced 2[4Fe-4S]-[ferredoxin] + 2 ATP + 2 H2O. It functions in the pathway porphyrin-containing compound metabolism; chlorophyll biosynthesis (light-independent). Functionally, component of the dark-operative protochlorophyllide reductase (DPOR) that uses Mg-ATP and reduced ferredoxin to reduce ring D of protochlorophyllide (Pchlide) to form chlorophyllide a (Chlide). This reaction is light-independent. The NB-protein (ChlN-ChlB) is the catalytic component of the complex. The sequence is that of Light-independent protochlorophyllide reductase subunit N from Acaryochloris marina (strain MBIC 11017).